A 716-amino-acid chain; its full sequence is uncharacterized protein (716 aa).

Disordered stretches follow at residues 84–103 and 153–189; these read SPSI…ERYP and VTDE…SQTQ. A Phosphoserine modification is found at serine 97. Glycyl lysine isopeptide (Lys-Gly) (interchain with G-Cter in SUMO2) cross-links involve residues lysine 201, lysine 204, lysine 237, lysine 283, and lysine 626.

This is an uncharacterized protein from Homo sapiens (Human).